Here is a 491-residue protein sequence, read N- to C-terminus: Cytochrome P450 2F1 (491 aa).

Cys-436 contacts heme.

This sequence belongs to the cytochrome P450 family. Heme serves as cofactor. In terms of tissue distribution, expressed in lung. Rarely detected in liver and placenta.

The protein resides in the endoplasmic reticulum membrane. It is found in the microsome membrane. The catalysed reaction is an organic molecule + reduced [NADPH--hemoprotein reductase] + O2 = an alcohol + oxidized [NADPH--hemoprotein reductase] + H2O + H(+). May be involved in the metabolism of various pneumotoxicants including naphthalene. Is able to dealkylate ethoxycoumarin, propoxycoumarin, and pentoxyresorufin but possesses no activity toward ethoxyresorufin and only trace dearylation activity toward benzyloxyresorufin. Bioactivates 3-methylindole (3MI) by dehydrogenation to the putative electrophile 3-methylene-indolenine. The protein is Cytochrome P450 2F1 (CYP2F1) of Homo sapiens (Human).